A 249-amino-acid chain; its full sequence is FMN reductase [NAD(P)H] (249 aa).

Residues 11 to 15, Gln67, 134 to 136, and 173 to 175 each bind FMN; these read HRSIR, PIG, and KPR.

It belongs to the flavin oxidoreductase frp family. Homodimer.

It catalyses the reaction FMNH2 + NADP(+) = FMN + NADPH + 2 H(+). The enzyme catalyses FMNH2 + NAD(+) = FMN + NADH + 2 H(+). FMN is a competitive inhibitor of NADH, and therefore leads to the preferential utilization of NADPH. In terms of biological role, reduces FMNH(2) to FMN, with NADH or NADPH as reductant. It also reduces nitroaromatic compounds, quinones, chromates and azo dyes. It could supply the reduced form of FMN to luciferase-like protein and contribute to the degradation of aromatic compounds. The sequence is that of FMN reductase [NAD(P)H] (nfrA2) from Bacillus subtilis (strain 168).